The following is a 598-amino-acid chain: Autophagy-related protein 22-1 (598 aa).

Positions 1–20 are disordered; that stretch reads MEDGGAGLRAPRYPAEDTSP. Residues 28–48 form a helical membrane-spanning segment; that stretch reads GFFCYGLAAEVFAVCAVGSFL. Asparagine 74 and asparagine 80 each carry an N-linked (GlcNAc...) asparagine glycan. Helical transmembrane passes span 111–131, 159–179, and 182–202; these read SFAMYTFSASVFMQALALVSV, FLLVVPQIFVVGSFLTVICVV, and GCSFVILNSYLPLLVLNHPVV. The tract at residues 207-238 is disordered; that stretch reads DHPTASSSIPLQPISPQRSSRKSEESLHQVNR. The span at 212 to 224 shows a compositional bias: low complexity; that stretch reads SSSIPLQPISPQR. Residues 227 to 238 show a composition bias toward basic and acidic residues; the sequence is RKSEESLHQVNR. The chain crosses the membrane as a helical span at residues 263-283; that stretch reads VGIGYMAAVSVQVICILILYI. Residue asparagine 285 is glycosylated (N-linked (GlcNAc...) asparagine). A run of 7 helical transmembrane segments spans residues 297–317, 363–383, 400–420, 431–451, 465–485, 489–509, and 534–554; these read TVLFFVGSWWLTFTIPSVMWL, VLLFLIAWFLLSDAVATISAT, ALLSIIATSSGIIGATVWPII, IIVCCLLLLELVPLYGLLGFL, WYEIYPLGIIHGMVMGGLSSY, FYGLLIPPGSEAAFYALFAIT, and AFGFLAVLIALPIPLIWMVDV. A disordered region spans residues 575–598; that stretch reads HEDFESFEGSSDGHEAEGLMRDHD. Residues 585–598 are compositionally biased toward basic and acidic residues; it reads SDGHEAEGLMRDHD.

This sequence belongs to the ATG22 family.

It is found in the vacuole membrane. In terms of biological role, vacuolar effluxer which mediate the efflux of amino acids resulting from autophagic degradation. The release of autophagic amino acids allows the maintenance of protein synthesis and viability during nitrogen starvation. This chain is Autophagy-related protein 22-1 (atg22-1), found in Sclerotinia sclerotiorum (strain ATCC 18683 / 1980 / Ss-1) (White mold).